A 683-amino-acid polypeptide reads, in one-letter code: Leucine-rich repeat protein soc-2 homolog (683 aa).

Low complexity predominate over residues 1 to 19 (MNLCSSGATASTTSLSSTG). Disordered regions lie at residues 1–54 (MNLC…SDVS) and 74–150 (GTDE…IQAD). The span at 26–49 (GVPGGGAEGGGGGGGSGNSGGGGK) shows a compositional bias: gly residues. The span at 74–86 (GTDELSNANSPAN) shows a compositional bias: low complexity. Residues 99-117 (QQPTGSNGHSHLHNENNAN) show a composition bias toward polar residues. LRR repeat units follow at residues 164–185 (GIKRLDLSKSSITVIPSTVKEC), 187–208 (HLTELYLYSNKIGQLPPEIGCL), 210–231 (SLRNLALNENSLTSLPESLQNC), 233–254 (QLKVLDLRHNKLAEIPSVIYRL), 256–277 (SLTTLYLRFNRITAVADDLRQL), 279–300 (NLTMLSLRENKIRELGSAIGAL), 302–323 (NLTTLDVSHNHLEHLPEDIGNC), 325–346 (NLSALDLQHNELLDIPDSIGNL), 348–370 (SLVRLGMRYNRLSSVPATLKNCK), 371–392 (SMDEFNVEGNGITQLPDGMLAS), 395–416 (GLTTITLSRNQFASYPTGGPAQ), 419–440 (NVYSINLEHNRIDKIPYGIFSR), 443–464 (GLTKLNMKENMLTALPLDIGTW), 466–487 (NMVELNLATNALQKLPDDIMNL), 489–510 (NLEILILSNNMLKKIPNTIGNL), 512–533 (RLRILDLEENRIEVLPHEIGLL), 535–556 (ELQRLILQTNQITMLPRSIGHL), 558–579 (NLTHLSVSENNLQFLPEEIGSL), 581–603 (SLENLYINQNPGLEKLPFELALC), and 605–626 (NLKYLNIDKCPLSTIPPEIQAG). Gly residues predominate over residues 661–671 (AGGNGGGGAAA). A disordered region spans residues 661–683 (AGGNGGGGAAAAGGSASRSSDRR). Over residues 672–683 (AGGSASRSSDRR) the composition is skewed to low complexity.

Belongs to the SHOC2 family.

Acts as a Ras effector and participates in MAPK pathway activation. Probably acts as a regulatory subunit of protein phosphatase that specifically dephosphorylates Raf kinase and stimulate Raf activity at specialized signaling complexes upon Ras activation. The polypeptide is Leucine-rich repeat protein soc-2 homolog (Sur-8) (Drosophila sechellia (Fruit fly)).